Here is a 584-residue protein sequence, read N- to C-terminus: Beta-(1--&gt;2)glucan export ATP-binding/permease protein NdvA (584 aa).

Residues Val-21–Glu-301 form the ABC transmembrane type-1 domain. Helical transmembrane passes span Ile-29–Ile-49, Asp-57–Ala-77, Thr-136–Val-156, Leu-158–Asp-178, Ile-248–Gly-268, and Val-272–Met-292. The ABC transporter domain occupies Val-335–Thr-569. Residue Gly-368–Thr-375 participates in ATP binding.

The protein belongs to the ABC transporter superfamily. Beta-(1--&gt;2)glucan exporter (TC 3.A.1.108.1) family. In terms of assembly, homodimer.

Its subcellular location is the cell inner membrane. The enzyme catalyses [(1-&gt;2)-beta-D-glucosyl](n)(in) + ATP + H2O = [(1-&gt;2)-beta-D-glucosyl](n)(out) + ADP + phosphate + H(+). Involved in beta-(1--&gt;2)glucan export. Transmembrane domains (TMD) form a pore in the inner membrane and the ATP-binding domain (NBD) is responsible for energy generation. In Agrobacterium vitis (Rhizobium vitis), this protein is Beta-(1--&gt;2)glucan export ATP-binding/permease protein NdvA.